A 492-amino-acid chain; its full sequence is N-succinylglutamate 5-semialdehyde dehydrogenase (492 aa).

220-225 (GSASTG) serves as a coordination point for NAD(+). Residues Glu-243 and Cys-277 contribute to the active site.

The protein belongs to the aldehyde dehydrogenase family. AstD subfamily.

The enzyme catalyses N-succinyl-L-glutamate 5-semialdehyde + NAD(+) + H2O = N-succinyl-L-glutamate + NADH + 2 H(+). It functions in the pathway amino-acid degradation; L-arginine degradation via AST pathway; L-glutamate and succinate from L-arginine: step 4/5. Its function is as follows. Catalyzes the NAD-dependent reduction of succinylglutamate semialdehyde into succinylglutamate. The chain is N-succinylglutamate 5-semialdehyde dehydrogenase from Salmonella dublin (strain CT_02021853).